We begin with the raw amino-acid sequence, 390 residues long: ATP-sensitive inward rectifier potassium channel 11 (390 aa).

At 1–65 the chain is on the cytoplasmic side; that stretch reads MLSRKGIIPE…LQDVFTTLVD (65 aa). Positions 48 and 50 each coordinate ATP. A helical membrane pass occupies residues 66-92; it reads LKWTHTLLIFTMSFLCSWLLFAMVWWL. The Extracellular segment spans residues 93 to 116; it reads IAFAHGDLAPGEGAAVPCVTSIHS. An intrachain disulfide couples Cys110 to Cys142. The segment at residues 117 to 133 is an intramembrane region (discontinuously helical; Pore-forming); sequence FSSAFLFSIEVQVTIGF. 2 residues coordinate K(+): Thr130 and Phe133. Residues 130–135 carry the Selectivity filter motif; that stretch reads TIGFGG. The Extracellular portion of the chain corresponds to 134 to 142; the sequence is GGRMVTEEC. The helical transmembrane segment at 143-171 threads the bilayer; that stretch reads PLAILILIVQNIVGLMINAIMLGCIFMKT. Residues 172-390 are Cytoplasmic-facing; that stretch reads AQAHRRAETL…KFSISPDSLS (219 aa). Arg176 serves as a coordination point for a 1,2-diacyl-sn-glycero-3-phospho-(1D-myo-inositol-4,5-bisphosphate). Residue Tyr330 coordinates ATP. Thr341 is subject to Phosphothreonine; by MAPK1. Ser385 carries the post-translational modification Phosphoserine; by MAPK1.

Belongs to the inward rectifier-type potassium channel (TC 1.A.2.1) family. KCNJ11 subfamily. As to quaternary structure, homotetramer; the homotetramer binds four ATP molecules (one ATP per subunit). Forms an heterooctamer with ABCC8/SUR1; one KCNJ11 homotetramer interacts with four ABCC8/SUR1 molecules. Interacts with ABCC9/SUR2. Phosphorylation by MAPK1 results in changes in channel gating that destabilize the closed states and reduce the ATP sensitivity.

Its subcellular location is the membrane. The enzyme catalyses K(+)(in) = K(+)(out). With respect to regulation, KATP channels are regulated by cytoplasmic ATP/ADP ratios; ATP inhibits the channel by closing the pore, while ADP activates the channel. Activated by phosphatidylinositol 4,5-biphosphate (PtdIns(4,5)P2). In terms of biological role, inward rectifier potassium channel that forms the pore of ATP-sensitive potassium channels (KATP), regulating potassium permeability as a function of cytoplasmic ATP and ADP concentrations in many different cells. Inward rectifier potassium channels are characterized by a greater tendency to allow potassium to flow into the cell rather than out of it. Their voltage dependence is regulated by the concentration of extracellular potassium; as external potassium is raised, the voltage range of the channel opening shifts to more positive voltages. The inward rectification is mainly due to the blockage of outward current by internal magnesium. Can be blocked by extracellular barium. In pancreatic cells, it forms KATP channels with ABCC8/SUR1. Can form cardiac and smooth muscle-type KATP channels with ABCC9. The sequence is that of ATP-sensitive inward rectifier potassium channel 11 (KCNJ11) from Oryctolagus cuniculus (Rabbit).